The following is a 190-amino-acid chain: Imidazoleglycerol-phosphate dehydratase (190 aa).

It belongs to the imidazoleglycerol-phosphate dehydratase family.

It localises to the cytoplasm. It catalyses the reaction D-erythro-1-(imidazol-4-yl)glycerol 3-phosphate = 3-(imidazol-4-yl)-2-oxopropyl phosphate + H2O. It functions in the pathway amino-acid biosynthesis; L-histidine biosynthesis; L-histidine from 5-phospho-alpha-D-ribose 1-diphosphate: step 6/9. This is Imidazoleglycerol-phosphate dehydratase from Sulfurovum sp. (strain NBC37-1).